A 616-amino-acid polypeptide reads, in one-letter code: Dihydroxy-acid dehydratase (616 aa).

D81 is a binding site for Mg(2+). [2Fe-2S] cluster is bound at residue C122. Mg(2+) is bound by residues D123 and K124. Position 124 is an N6-carboxylysine (K124). Residue C195 participates in [2Fe-2S] cluster binding. E491 contacts Mg(2+). S517 functions as the Proton acceptor in the catalytic mechanism.

The protein belongs to the IlvD/Edd family. Homodimer. Requires [2Fe-2S] cluster as cofactor. Mg(2+) is required as a cofactor.

It catalyses the reaction (2R)-2,3-dihydroxy-3-methylbutanoate = 3-methyl-2-oxobutanoate + H2O. The enzyme catalyses (2R,3R)-2,3-dihydroxy-3-methylpentanoate = (S)-3-methyl-2-oxopentanoate + H2O. It participates in amino-acid biosynthesis; L-isoleucine biosynthesis; L-isoleucine from 2-oxobutanoate: step 3/4. It functions in the pathway amino-acid biosynthesis; L-valine biosynthesis; L-valine from pyruvate: step 3/4. Functionally, functions in the biosynthesis of branched-chain amino acids. Catalyzes the dehydration of (2R,3R)-2,3-dihydroxy-3-methylpentanoate (2,3-dihydroxy-3-methylvalerate) into 2-oxo-3-methylpentanoate (2-oxo-3-methylvalerate) and of (2R)-2,3-dihydroxy-3-methylbutanoate (2,3-dihydroxyisovalerate) into 2-oxo-3-methylbutanoate (2-oxoisovalerate), the penultimate precursor to L-isoleucine and L-valine, respectively. This chain is Dihydroxy-acid dehydratase, found in Shewanella sediminis (strain HAW-EB3).